The chain runs to 101 residues: Small ribosomal subunit protein uS14 (101 aa).

It belongs to the universal ribosomal protein uS14 family. In terms of assembly, part of the 30S ribosomal subunit. Contacts proteins S3 and S10.

In terms of biological role, binds 16S rRNA, required for the assembly of 30S particles and may also be responsible for determining the conformation of the 16S rRNA at the A site. The protein is Small ribosomal subunit protein uS14 of Aeromonas hydrophila subsp. hydrophila (strain ATCC 7966 / DSM 30187 / BCRC 13018 / CCUG 14551 / JCM 1027 / KCTC 2358 / NCIMB 9240 / NCTC 8049).